We begin with the raw amino-acid sequence, 47 residues long: PhoP/PhoQ regulator MgrB (47 aa).

The helical transmembrane segment at 6–26 (WVVLVVVVLACLLLWAQVFNM) threads the bilayer.

It belongs to the MgrB family. As to quaternary structure, may form homooligomers. Probably interacts with the periplasmic domain of PhoQ.

It is found in the cell inner membrane. In terms of biological role, phoP-regulated transcription is redox-sensitive, being activated when the periplasm becomes more reducing. MgrB acts between DsbA/DsbB and PhoP/PhoQ in this pathway. Represses PhoP/PhoQ signaling, possibly by binding to the periplasmic domain of PhoQ, altering its activity and that of downstream effector PhoP. This chain is PhoP/PhoQ regulator MgrB, found in Escherichia coli O157:H7.